We begin with the raw amino-acid sequence, 435 residues long: Putative FBD-associated F-box protein At5g56820 (435 aa).

Positions 14 to 60 constitute an F-box domain; that stretch reads SDRISYLPDDLLLRILSFIHTSDAISTSLLSKRWKFVWKMMPTLDLD. The FBD domain maps to 341 to 390; that stretch reads VRKPNSVPECLTFHLETLEWQGYAGRPEDKEIAVYILGNALRLNTATISR.

In Arabidopsis thaliana (Mouse-ear cress), this protein is Putative FBD-associated F-box protein At5g56820.